Reading from the N-terminus, the 232-residue chain is Large ribosomal subunit protein uL1 (232 aa).

The protein belongs to the universal ribosomal protein uL1 family. In terms of assembly, part of the 50S ribosomal subunit.

Functionally, binds directly to 23S rRNA. The L1 stalk is quite mobile in the ribosome, and is involved in E site tRNA release. Its function is as follows. Protein L1 is also a translational repressor protein, it controls the translation of the L11 operon by binding to its mRNA. The chain is Large ribosomal subunit protein uL1 from Paraburkholderia phymatum (strain DSM 17167 / CIP 108236 / LMG 21445 / STM815) (Burkholderia phymatum).